A 275-amino-acid polypeptide reads, in one-letter code: Voltage-dependent calcium channel gamma-7 subunit (275 aa).

4 helical membrane passes run 8–28 (ALTLLSSVFGACGLLLVGIAV), 103–123 (FPMVSLFLVFTAFVISNIGHI), 129–149 (ILAFVSGIFFILSGLSLVVGL), and 179–199 (FAFAASSFLLKEGAGVMSVYL). Ser222, Ser225, and Ser273 each carry phosphoserine.

The protein belongs to the PMP-22/EMP/MP20 family. CACNG subfamily. Interacts with CACNA1C. Identified in a complex with the L-type calcium channel subunits CACNA1C, CACNA2D1 and either CACNB1 or CACNB2. Acts as an auxiliary subunit for AMPA-selective glutamate receptors (AMPARs), such as GRIA1 and GRIA2. Detected in heart left ventricle. Widely expressed.

It localises to the cell membrane. Regulates the activity of L-type calcium channels that contain CACNA1C as pore-forming subunit. Regulates the trafficking and gating properties of AMPA-selective glutamate receptors (AMPARs). Promotes their targeting to the cell membrane and synapses and modulates their gating properties by slowing their rates of activation, deactivation and desensitization and by mediating their resensitization. Displays subunit-specific AMPA receptor regulation. Shows specificity only for GRIA1 and GRIA2. This chain is Voltage-dependent calcium channel gamma-7 subunit (CACNG7), found in Homo sapiens (Human).